The primary structure comprises 742 residues: Glucosylceramidase (742 aa).

2 N-linked (GlcNAc...) asparagine glycosylation sites follow: N37 and N160. The active-site Proton donor is E258. N-linked (GlcNAc...) asparagine glycosylation is present at N388. The active-site Nucleophile is E492. N-linked (GlcNAc...) asparagine glycans are attached at residues N552, N560, and N698. The chain crosses the membrane as a helical span at residues 701–721 (IAQILVAVVILLLGVLVAYYA).

It belongs to the glycosyl hydrolase 5 (cellulase A) family.

It is found in the membrane. The catalysed reaction is a beta-D-glucosyl-(1&lt;-&gt;1')-N-acylsphing-4-enine + H2O = an N-acylsphing-4-enine + D-glucose. In terms of biological role, specifically hydrolyzes the glucosidic linkage in glucosylceramide. May prevent accumulation of aberrent glucosylceramide containing immature ceramide. This Cryptococcus neoformans var. grubii serotype A (strain H99 / ATCC 208821 / CBS 10515 / FGSC 9487) (Filobasidiella neoformans var. grubii) protein is Glucosylceramidase.